Reading from the N-terminus, the 962-residue chain is Protease 3 (962 aa).

Residues 1-23 (MPRSTWFKALLLFVALWAPLSQA) form the signal peptide. Histidine 88 serves as a coordination point for Zn(2+). The Proton acceptor role is filled by glutamate 91. 2 residues coordinate Zn(2+): histidine 92 and glutamate 169.

Belongs to the peptidase M16 family. In terms of assembly, monomer. The cofactor is Zn(2+).

Its subcellular location is the periplasm. It catalyses the reaction Preferential cleavage of 16-Tyr-|-Leu-17 and 25-Phe-|-Tyr-26 bonds of oxidized insulin B chain. Also acts on other substrates of Mw less than 7 kDa such as insulin and glucagon.. Endopeptidase that degrades small peptides of less than 7 kDa, such as glucagon and insulin. The sequence is that of Protease 3 (ptrA) from Shigella flexneri.